The following is a 387-amino-acid chain: Succinate--CoA ligase [ADP-forming] subunit beta (387 aa).

The 236-residue stretch at 9 to 244 (KALLQRYGVN…WSQDDAKEAE (236 aa)) folds into the ATP-grasp domain. ATP is bound by residues K46, 53–55 (GRG), E99, L102, and E107. The Mg(2+) site is built by N199 and D213. Substrate contacts are provided by residues N264 and 321-323 (GIM).

This sequence belongs to the succinate/malate CoA ligase beta subunit family. In terms of assembly, heterotetramer of two alpha and two beta subunits. Mg(2+) is required as a cofactor.

The catalysed reaction is succinate + ATP + CoA = succinyl-CoA + ADP + phosphate. The enzyme catalyses GTP + succinate + CoA = succinyl-CoA + GDP + phosphate. Its pathway is carbohydrate metabolism; tricarboxylic acid cycle; succinate from succinyl-CoA (ligase route): step 1/1. Functionally, succinyl-CoA synthetase functions in the citric acid cycle (TCA), coupling the hydrolysis of succinyl-CoA to the synthesis of either ATP or GTP and thus represents the only step of substrate-level phosphorylation in the TCA. The beta subunit provides nucleotide specificity of the enzyme and binds the substrate succinate, while the binding sites for coenzyme A and phosphate are found in the alpha subunit. The chain is Succinate--CoA ligase [ADP-forming] subunit beta from Methylobacillus flagellatus (strain ATCC 51484 / DSM 6875 / VKM B-1610 / KT).